The chain runs to 230 residues: Probable cytokinin riboside 5'-monophosphate phosphoribohydrolase LOG4 (230 aa).

Substrate-binding positions include glutamate 91, 109–110, and 126–132; these read RK and GYGTIEE.

The protein belongs to the LOG family.

The enzyme catalyses N(6)-(dimethylallyl)adenosine 5'-phosphate + H2O = N(6)-dimethylallyladenine + D-ribose 5-phosphate. It carries out the reaction 9-ribosyl-trans-zeatin 5'-phosphate + H2O = trans-zeatin + D-ribose 5-phosphate. Cytokinin-activating enzyme working in the direct activation pathway. Phosphoribohydrolase that converts inactive cytokinin nucleotides to the biologically active free-base forms. This chain is Probable cytokinin riboside 5'-monophosphate phosphoribohydrolase LOG4 (LOGL4), found in Oryza sativa subsp. japonica (Rice).